We begin with the raw amino-acid sequence, 443 residues long: Enolase B (443 aa).

2 residues coordinate substrate: H156 and E165. E208 functions as the Proton donor in the catalytic mechanism. The Mg(2+) site is built by D243, E296, and D323. Substrate-binding residues include E296 and D323. K348 serves as the catalytic Proton acceptor. Substrate contacts are provided by residues 375-378 and K399; that span reads SHRS.

It belongs to the enolase family. Homodimer. The cofactor is Mg(2+).

The protein resides in the cytoplasm. It catalyses the reaction (2R)-2-phosphoglycerate = phosphoenolpyruvate + H2O. It participates in carbohydrate degradation; glycolysis; pyruvate from D-glyceraldehyde 3-phosphate: step 4/5. The sequence is that of Enolase B (enoB) from Dictyostelium discoideum (Social amoeba).